We begin with the raw amino-acid sequence, 182 residues long: Inosine/xanthosine triphosphatase (182 aa).

Mg(2+)-binding residues include D38 and E68. Position 68-69 (68-69) interacts with substrate; the sequence is EA.

It belongs to the YjjX NTPase family. As to quaternary structure, homodimer. The cofactor is Mg(2+). Mn(2+) serves as cofactor.

It catalyses the reaction XTP + H2O = XDP + phosphate + H(+). The enzyme catalyses ITP + H2O = IDP + phosphate + H(+). Its function is as follows. Phosphatase that hydrolyzes non-canonical purine nucleotides such as XTP and ITP to their respective diphosphate derivatives. Probably excludes non-canonical purines from DNA/RNA precursor pool, thus preventing their incorporation into DNA/RNA and avoiding chromosomal lesions. This is Inosine/xanthosine triphosphatase from Erwinia tasmaniensis (strain DSM 17950 / CFBP 7177 / CIP 109463 / NCPPB 4357 / Et1/99).